Here is a 451-residue protein sequence, read N- to C-terminus: UPF0210 protein CLH_1879 (451 aa).

It belongs to the UPF0210 family. As to quaternary structure, homodimer.

The sequence is that of UPF0210 protein CLH_1879 from Clostridium botulinum (strain Alaska E43 / Type E3).